A 597-amino-acid polypeptide reads, in one-letter code: MGKKHKKHKAEWRSSYEDYADKPLEKPLKLVLKVGGSEVTELSGSGHDSSYYDDRSDHERERHKEKKKKKKKKSEKEKHLDDEERRKRKEEKKRKREREHCDTEGEADDFDPGKKVEVEPPPDRPVRACRTQPAENESTPIQQLLEHFLRQLQRKDPHGFFAFPVTDAIAPGYSMIIKHPMDFGTMKDKIVANEYKSVTEFKADFKLMCDNAMTYNRPDTVYYKLAKKILHAGFKMMSKQAALLGNEDTAVEEPVPEVVPVQVETAKKSKKPSREVISCMFEPEGNACSLTDSTAEEHVLALVEHAADEARDRINRFLPGGKMGYLKRNGDGSLLYSVVNTAEPDADEEETHPVDLSSLSSKLLPGFTTLGFKDERRNKVTFLSSATTALSMQNNSVFGDLKSDEMELLYSAYGDETGVQCALSLQEFVKDAGSYSKKVVDDLLDQITGGDHSRTLFQLKQRRNVPMKPPDEAKVGDTLGDSSSSVLEFMSMKSYPDVSVDISMLSSLGKVKKELDPDDSHLNLDETTKLLQDLHEAQAERGGSRPSSNLSSLSNASERDQHHLGSPSRLSVGEQPDVTHDPYEFLQSPEPAASAKT.

The span at 1 to 10 shows a compositional bias: basic residues; that stretch reads MGKKHKKHKA. 2 disordered regions span residues 1-25 and 38-138; these read MGKK…KPLE and EVTE…ENES. Composition is skewed to basic and acidic residues over residues 11–25 and 50–62; these read EWRS…KPLE and SYYD…ERER. A Phosphoserine modification is found at serine 56. Basic residues predominate over residues 63–73; the sequence is HKEKKKKKKKK. Residues 74-85 show a composition bias toward basic and acidic residues; sequence SEKEKHLDDEER. Residues 86–97 are compositionally biased toward basic residues; sequence RKRKEEKKRKRE. Over residues 111–126 the composition is skewed to basic and acidic residues; it reads DPGKKVEVEPPPDRPV. One can recognise a Bromo domain in the interval 136 to 240; it reads NESTPIQQLL…HAGFKMMSKQ (105 aa). Residues 214-216 form a histone H4K5ac H4K8ac and histone H4K5bu H4K8bu binding region; the sequence is TYN. Position 373 is an N6-acetyllysine; alternate (lysine 373). Lysine 373 participates in a covalent cross-link: Glycyl lysine isopeptide (Lys-Gly) (interchain with G-Cter in SUMO2); alternate. Positions 536-597 are disordered; the sequence is EAQAERGGSR…SPEPAASAKT (62 aa). The segment covering 544–556 has biased composition (low complexity); the sequence is SRPSSNLSSLSNA. 2 positions are modified to phosphoserine: serine 566 and serine 588.

In terms of assembly, binds acetylated histones H3 and H4. Binds butyrylated histone H4. Component of the multiprotein chromatin-remodeling subcomplex SWI/SNF called GBAF, which includes at least BICRA or BICRAL (mutually exclusive), BRD9, SS18, the core BAF subunits, SMARCA2/BRM, SMARCA4/BRG1/BAF190A, ACTL6A/BAF53, SMARCC1/BAF155, and SMARCD1/BAF60A. Interacts (via N-terminal bromodomain) with acetylated RAD54. Interacts (via C-terminus) with RAD51.

The protein resides in the nucleus. Its function is as follows. Plays a role in chromatin remodeling and regulation of transcription. Acts as a chromatin reader that recognizes and binds acylated histones: binds histones that are acetylated and/or butyrylated. Component of SWI/SNF chromatin remodeling subcomplex GBAF that carries out key enzymatic activities, changing chromatin structure by altering DNA-histone contacts within a nucleosome in an ATP-dependent manner. Also orchestrates the RAD51-RAD54 complex formation and thereby plays a role in homologous recombination (HR). This Homo sapiens (Human) protein is Bromodomain-containing protein 9 (BRD9).